Consider the following 208-residue polypeptide: NADH-quinone oxidoreductase subunit I 2 (208 aa).

4Fe-4S ferredoxin-type domains lie at 79–109 (ILVEYGKSRCVVCLRCKRACPVPQLFEIEGK) and 119–148 (SVFNMNMLLCTYCGFCVDACPVDCLYQTDI). Residues Cys88, Cys91, Cys94, Cys98, Cys128, Cys131, Cys134, and Cys138 each coordinate [4Fe-4S] cluster.

Belongs to the complex I 23 kDa subunit family. In terms of assembly, NDH-1 is composed of 14 different subunits. Subunits NuoA, H, J, K, L, M, N constitute the membrane sector of the complex. Requires [4Fe-4S] cluster as cofactor.

Its subcellular location is the cell inner membrane. It carries out the reaction a quinone + NADH + 5 H(+)(in) = a quinol + NAD(+) + 4 H(+)(out). NDH-1 shuttles electrons from NADH, via FMN and iron-sulfur (Fe-S) centers, to quinones in the respiratory chain. The immediate electron acceptor for the enzyme in this species is believed to be ubiquinone. Couples the redox reaction to proton translocation (for every two electrons transferred, four hydrogen ions are translocated across the cytoplasmic membrane), and thus conserves the redox energy in a proton gradient. This is NADH-quinone oxidoreductase subunit I 2 from Aquifex aeolicus (strain VF5).